A 413-amino-acid chain; its full sequence is Serine hydroxymethyltransferase (413 aa).

Residues leucine 119 and 123-125 (GHL) each bind (6S)-5,6,7,8-tetrahydrofolate. Lysine 228 carries the N6-(pyridoxal phosphate)lysine modification. 351–353 (SPF) serves as a coordination point for (6S)-5,6,7,8-tetrahydrofolate.

The protein belongs to the SHMT family. In terms of assembly, homodimer. Pyridoxal 5'-phosphate is required as a cofactor.

The protein localises to the cytoplasm. The catalysed reaction is (6R)-5,10-methylene-5,6,7,8-tetrahydrofolate + glycine + H2O = (6S)-5,6,7,8-tetrahydrofolate + L-serine. It participates in one-carbon metabolism; tetrahydrofolate interconversion. The protein operates within amino-acid biosynthesis; glycine biosynthesis; glycine from L-serine: step 1/1. Its function is as follows. Catalyzes the reversible interconversion of serine and glycine with tetrahydrofolate (THF) serving as the one-carbon carrier. This reaction serves as the major source of one-carbon groups required for the biosynthesis of purines, thymidylate, methionine, and other important biomolecules. Also exhibits THF-independent aldolase activity toward beta-hydroxyamino acids, producing glycine and aldehydes, via a retro-aldol mechanism. This chain is Serine hydroxymethyltransferase, found in Clostridium botulinum (strain Langeland / NCTC 10281 / Type F).